The chain runs to 25 residues: Chaperone protein DnaK (25 aa).

The protein belongs to the heat shock protein 70 family.

Functionally, acts as a chaperone. The chain is Chaperone protein DnaK (dnaK) from Acinetobacter calcoaceticus.